The primary structure comprises 232 residues: 2,3,4,5-tetrahydropyridine-2,6-dicarboxylate N-acetyltransferase (232 aa).

Belongs to the transferase hexapeptide repeat family. DapH subfamily.

The enzyme catalyses (S)-2,3,4,5-tetrahydrodipicolinate + acetyl-CoA + H2O = L-2-acetamido-6-oxoheptanedioate + CoA. It participates in amino-acid biosynthesis; L-lysine biosynthesis via DAP pathway; LL-2,6-diaminopimelate from (S)-tetrahydrodipicolinate (acetylase route): step 1/3. Its function is as follows. Catalyzes the transfer of an acetyl group from acetyl-CoA to tetrahydrodipicolinate. This is 2,3,4,5-tetrahydropyridine-2,6-dicarboxylate N-acetyltransferase from Streptococcus pneumoniae serotype 2 (strain D39 / NCTC 7466).